Reading from the N-terminus, the 327-residue chain is Phenylalanine--tRNA ligase alpha subunit (327 aa).

Glu252 contributes to the Mg(2+) binding site.

This sequence belongs to the class-II aminoacyl-tRNA synthetase family. Phe-tRNA synthetase alpha subunit type 1 subfamily. Tetramer of two alpha and two beta subunits. The cofactor is Mg(2+).

The protein resides in the cytoplasm. The enzyme catalyses tRNA(Phe) + L-phenylalanine + ATP = L-phenylalanyl-tRNA(Phe) + AMP + diphosphate + H(+). This Shewanella sediminis (strain HAW-EB3) protein is Phenylalanine--tRNA ligase alpha subunit.